The primary structure comprises 164 residues: uncharacterized protein (164 aa).

The tract at residues 144-164 (GFISPEKEHESEDMTSQSLVA) is disordered.

This is an uncharacterized protein from Synechocystis sp. (strain ATCC 27184 / PCC 6803 / Kazusa).